A 1347-amino-acid chain; its full sequence is Protocadherin-11 X-linked (1347 aa).

A signal peptide spans 1–23 (MDLLSGTYIFAVLLACVVFHSGA). The Extracellular segment spans residues 24-812 (QEKNYTIREE…VSSPTSDYVK (789 aa)). Cadherin domains follow at residues 26–139 (KNYT…APLF), 140–249 (PATV…HPVF), 250–355 (KETE…VPSI), 362–466 (NPIN…APVF), 467–570 (TQSF…SPVF), 571–673 (THNE…KPVF), and 677–795 (PSNY…APVT). N-linked (GlcNAc...) asparagine glycans are attached at residues Asn-27, Asn-48, and Asn-54. Asn-344 carries an N-linked (GlcNAc...) asparagine glycan. N-linked (GlcNAc...) asparagine glycosylation occurs at Asn-553. N-linked (GlcNAc...) asparagine glycosylation occurs at Asn-773. The chain crosses the membrane as a helical span at residues 813–833 (ILVAAVAGTVTVVVVIFITAV). The Cytoplasmic segment spans residues 834–1347 (VRCRQAPHLK…DSPIMEEHPL (514 aa)). 4 disordered regions span residues 1031–1050 (IWIH…GKSQ), 1057–1091 (LPEG…GYPQ), 1097–1116 (RATP…ESTF), and 1325–1347 (TFTP…EHPL).

It is found in the cell membrane. Functionally, potential calcium-dependent cell-adhesion protein. The chain is Protocadherin-11 X-linked (PCDH11X) from Pongo pygmaeus (Bornean orangutan).